The sequence spans 917 residues: Smoothelin (917 aa).

The residue at position 2 (alanine 2) is an N-acetylalanine. Positions 24–89 form a coiled coil; the sequence is LAERRRIRSA…ARLAGQLESM (66 aa). Positions 157–456 are disordered; it reads EVPEREEQEQ…AVGTAEPGGS (300 aa). Polar residues predominate over residues 177–188; that stretch reads PEGTSQDVTTVT. 2 stretches are compositionally biased toward low complexity: residues 193–210 and 220–232; these read APPGSTSSSPASPSSSPT and PAEAQCLTAEVPG. A compositionally biased stretch (pro residues) spans 233-243; it reads SPEPPPSPPKT. Low complexity predominate over residues 244–258; it reads TSPEPQESPTLPSTE. Residues 298–326 are compositionally biased toward polar residues; that stretch reads RSLSVLSPRQPAQNRESTPLASGPSSFQR. Phosphoserine occurs at positions 299, 301, and 304. Residues 329 to 338 are compositionally biased toward basic and acidic residues; that stretch reads SVRDRVHKFT. At serine 341 the chain carries Phosphoserine. The residue at position 351 (threonine 351) is a Phosphothreonine. A Phosphoserine modification is found at serine 357. A phosphothreonine mark is found at threonine 360 and threonine 373. The span at 363 to 392 shows a compositional bias: low complexity; that stretch reads RLLGPSLTSTTPASSSSGSSSRGPSDTSSR. Serine 503, serine 514, serine 523, and serine 576 each carry phosphoserine. 2 disordered regions span residues 560–580 and 617–767; these read ANGAEQTRVNKAPEGRSPLSA and QRKR…RKAM. The stretch at 603–630 forms a coiled coil; the sequence is EERKLIRAALRELRQRKRDQRDKERERR. Residues 617–640 are compositionally biased toward basic and acidic residues; sequence QRKRDQRDKERERRLQEARGRPGE. The span at 676–689 shows a compositional bias: polar residues; sequence NDGTRTARTTTVES. Residues 701–720 are compositionally biased toward low complexity; it reads STMMQTKTFSSSSSSKKMGS. Serine 729 is subject to Phosphoserine. Positions 738 to 750 are enriched in basic and acidic residues; it reads LEKRQAEKKKELM. Serine 792 bears the Phosphoserine mark. In terms of domain architecture, Calponin-homology (CH) spans 799-906; the sequence is NSIKQMLLDW…YVQSLYNHLR (108 aa).

The protein belongs to the smoothelin family. As to expression, smooth muscle; contractile or vascular (for the long form).

The protein localises to the cytoplasm. It is found in the cytoskeleton. Structural protein of the cytoskeleton. The protein is Smoothelin (SMTN) of Homo sapiens (Human).